Here is a 239-residue protein sequence, read N- to C-terminus: Caffeoyl-CoA O-methyltransferase 1 (239 aa).

Lysine 13 serves as a coordination point for substrate. S-adenosyl-L-methionine-binding positions include threonine 55, glutamate 77, 79–80, serine 85, aspartate 103, and alanine 132; that span reads GV. Residue aspartate 155 coordinates substrate. Aspartate 155 is an a divalent metal cation binding site. An S-adenosyl-L-methionine-binding site is contributed by aspartate 157. A divalent metal cation is bound by residues aspartate 181 and asparagine 182. Substrate is bound at residue asparagine 186.

Belongs to the class I-like SAM-binding methyltransferase superfamily. Cation-dependent O-methyltransferase family. CCoAMT subfamily. In terms of assembly, monomer. Mg(2+) is required as a cofactor. In terms of tissue distribution, mostly expressed in the bottom and middle parts of the stems.

The enzyme catalyses (E)-caffeoyl-CoA + S-adenosyl-L-methionine = (E)-feruloyl-CoA + S-adenosyl-L-homocysteine + H(+). Its pathway is aromatic compound metabolism; phenylpropanoid biosynthesis. Methylates caffeoyl-CoA to feruloyl-CoA and 5-hydroxyferuloyl-CoA to sinapoyl-CoA. Plays a role in the synthesis of feruloylated polysaccharides. Involved in the reinforcement of the plant cell wall. Also involved in the responding to wounding or pathogen challenge by the increased formation of cell wall-bound ferulic acid polymers. This is Caffeoyl-CoA O-methyltransferase 1 (CCOAOMT1) from Nicotiana tabacum (Common tobacco).